The following is a 64-amino-acid chain: Large ribosomal subunit protein bL32 (64 aa).

Over residues 1 to 10 (MAVPKRKTTP) the composition is skewed to basic residues. The segment at 1-22 (MAVPKRKTTPSKRDMRRANHDK) is disordered. Basic and acidic residues predominate over residues 11-22 (SKRDMRRANHDK).

This sequence belongs to the bacterial ribosomal protein bL32 family.

The sequence is that of Large ribosomal subunit protein bL32 from Sorangium cellulosum (strain So ce56) (Polyangium cellulosum (strain So ce56)).